Here is a 1499-residue protein sequence, read N- to C-terminus: MAEERPPRLVDYFVVAGLAGNGAPIPEEKWVPEPTGPLRPPRPAEPITDVAVIARALGEEVPQGYTCIQTSAGGHPLELSAGLLGGTQPVICYRRGRDKPPLVELGVLYEGKERPKLGFQVLDTTPYSHSANLAPPGPGHPRTYLMYRRAAEGAGLHALGITDLCLVLPSKGEGTPHTYCRLPRNLNPGMWGPAVYLCYKVGLAKANTLVYEAELLGRYPEEDNEAFPLPESVPVFCLPMGATIECWPAQTKYPVPVFSTFVLTGAAGDKVYGAALQFYEAFPRARLSERQARALGLMSAVERGRALGGRAVRSRRAIAVLSRWPAFPAFRAFLTFLYRYSVSGPHRLPLEAHISHFIHNVPFPSPQRPRILVQMSPYDNLLLCQPVSSPLPLSGASFLQLLQNLGPELAITLLLAVLTEHKLLVHSLRPDLLTSVCEALVSMIFPLHWQCPYIPLCPLVLADVLSAPVPFIVGIHSSYFDLHDPPADVICVDLDTNTLFQKEEKKPLSARTLPRRPYKLLLATLTSLYQQLDQTYTGPEEEASLEFLLTDYEAVCGRRTRLEREVQGAFLRFMACLLKGYRNFLRPLTQAPSEGSRDVDNLFYLQGFLKSRERSSHKLYSQLLHTQMFSQFIEECSFGSARHAALEFFDSCVDKVHPEQEKPEPTPLVELEELSGSELTVFITPPEEPPVLEGSESTPQYCYDGFPELKAELFESPQEQQGALPVPGPSRSAPSSPAPRRTKQEMKVAQRMAQKSATVPELWARCLLGHCYGLWFLCLPAYVRSVPSRVRALHTAYHVLREMENRKVVLPDEVCYRVLMQLCSHYGQPVLSVRVMLEMRRAGIVPNTITYGYYNKAVLESKWPSGTPGGRLRWAKLRNVVLGAAQFRQPLKDRRQQQQQQQQQQQQKQQVAEQQKSGSSQTEPYLERPSPTRPLQRQTTWAGRSLREPSSPMGRLVKSGSLGSARGTQPTVEAGVAHMIEALGVLEPRGSPVPWQDGSLSDLSLTGEEMAPGGSPGGSGSALSAQSTEALEGISGRGSKTSGCQEEVGTPRKGLGARLQQLLTPSRRASASRIPPPELPSDLPPAARRSPMDSLLWPRERPGSTASESSASLGSEWDISESSLSSLSLRRSSERLSDTPGAFQPPSLEILMSSCSLCHACDSLVYDEEIMAGWAPDDSNLNTTCPFCACHFVPLLSVQTLDSRPSAPSPKSSLAGASGCKDAPAPGGPGPVLSDRRFCLALDQPQLCNGHMGSASRRVENGAWAYLSPLVLRKELESLVENEGSEVLALPELPAAHPIIFWNLLWYFQRLRLPSVLPGLVLASCNGPPPSQLSQGPSPWLTPDPASVHVHLLWDVLTPDPNSCPPLYVLWRVHSQIPQRVVWPGPVPSCLSLALLESVLRHVGLNEVHKAVGLLLETLGPPPTGLHLQRGIYREILFLTMAALGKDHVDIVAFDKKYKSAFNKLASSMGKEELRQRRAQMPTPKAIDCRKCFGAPLEC.

Residues 26–45 are disordered; sequence PEEKWVPEPTGPLRPPRPAE. A compositionally biased stretch (pro residues) spans 34 to 44; the sequence is PTGPLRPPRPA. An MABP domain is found at 44–203; sequence AEPITDVAVI…AVYLCYKVGL (160 aa). A uDENN domain is found at 195–369; that stretch reads VYLCYKVGLA…NVPFPSPQRP (175 aa). The cDENN domain maps to 390–526; it reads PLPLSGASFL…PYKLLLATLT (137 aa). Residues 528 to 644 form the dDENN domain; the sequence is LYQQLDQTYT…ECSFGSARHA (117 aa). Residues 717–744 are disordered; it reads PQEQQGALPVPGPSRSAPSSPAPRRTKQ. Residues 729–739 are compositionally biased toward low complexity; the sequence is PSRSAPSSPAP. PPR repeat units follow at residues 775–811 and 812–846; these read WFLC…VVLP and DEVC…GIVP. 3 disordered regions span residues 890-968, 988-1115, and 1204-1226; these read PLKD…ARGT, PRGS…SLGS, and RPSA…APAP. The segment covering 897-915 has biased composition (low complexity); sequence QQQQQQQQQQQKQQVAEQQ. The segment covering 933 to 942 has biased composition (polar residues); the sequence is RPLQRQTTWA. A Phosphoserine modification is found at Ser-951. Over residues 1074-1083 the composition is skewed to pro residues; it reads IPPPELPSDL. Ser-1090 carries the phosphoserine modification. A compositionally biased stretch (low complexity) spans 1103 to 1115; sequence GSTASESSASLGS.

Its subcellular location is the golgi apparatus. Guanine nucleotide exchange factor (GEF) which may activate RAB10. Promotes the exchange of GDP to GTP, converting inactive GDP-bound Rab proteins into their active GTP-bound form. The chain is DENN domain-containing protein 4B (Dennd4b) from Mus musculus (Mouse).